A 529-amino-acid polypeptide reads, in one-letter code: Bifunctional purine biosynthesis protein PurH (529 aa).

The MGS-like domain occupies 1–148 (MQQRRPVRRA…KNHKDVAIVV (148 aa)). An N6-acetyllysine modification is found at K287.

The protein belongs to the PurH family.

It carries out the reaction (6R)-10-formyltetrahydrofolate + 5-amino-1-(5-phospho-beta-D-ribosyl)imidazole-4-carboxamide = 5-formamido-1-(5-phospho-D-ribosyl)imidazole-4-carboxamide + (6S)-5,6,7,8-tetrahydrofolate. It catalyses the reaction IMP + H2O = 5-formamido-1-(5-phospho-D-ribosyl)imidazole-4-carboxamide. Its pathway is purine metabolism; IMP biosynthesis via de novo pathway; 5-formamido-1-(5-phospho-D-ribosyl)imidazole-4-carboxamide from 5-amino-1-(5-phospho-D-ribosyl)imidazole-4-carboxamide (10-formyl THF route): step 1/1. It participates in purine metabolism; IMP biosynthesis via de novo pathway; IMP from 5-formamido-1-(5-phospho-D-ribosyl)imidazole-4-carboxamide: step 1/1. This is Bifunctional purine biosynthesis protein PurH from Escherichia coli O127:H6 (strain E2348/69 / EPEC).